A 1050-amino-acid polypeptide reads, in one-letter code: Diacylglycerol kinase iota (1050 aa).

2 disordered regions span residues 52-73 (NPSS…SGSG) and 325-356 (PQNS…ENKG). Basic residues predominate over residues 332–347 (SNRKKKRTSFKRKASK). The region spanning 367-502 (PLMKPLLVFV…DRWNLHVERN (136 aa)) is the DAGKc domain. ANK repeat units lie at residues 943-972 (GHCS…AELL) and 979-1008 (TGET…SLRQ). The short motif at 1048–1050 (TAV) is the PDZ-binding element.

Belongs to the eukaryotic diacylglycerol kinase family. As to quaternary structure, interacts (via PDZ-binding motif) with DLG4; controls the localization of DGKI to the synapse. Interacts (via PDZ-binding motif) with DLG1. Interacts (via PDZ-binding motif) with DLG2. Interacts (via PDZ-binding motif) with DLG3. May interact with RASGRP3; involved in the regulation of RASGRP3 activity. Specifically expressed in brain (at protein level). Expressed in hippocampus, cerebellum, brain stem and spinal cord (at protein level). Highly expressed in hippocampus, cerebellar cortex, olfactory bulb, and olfactory tubercle and to lower extent in the cerebral cortex, caudate putamen, and thalamus. Not detected in the white matter. Also expressed in eye. As to expression, major isoform in brain (at protein level). In terms of tissue distribution, minor isoform in brain (at protein level). Expressed in brain (at protein level).

The protein localises to the cell projection. It localises to the axon. Its subcellular location is the dendrite. The protein resides in the presynapse. It is found in the postsynapse. The protein localises to the postsynaptic density. It localises to the synaptic cell membrane. Its subcellular location is the cytoplasmic vesicle. The protein resides in the secretory vesicle. It is found in the synaptic vesicle membrane. The protein localises to the cytoplasm. It localises to the cytosol. Its subcellular location is the nucleus. The catalysed reaction is a 1,2-diacyl-sn-glycerol + ATP = a 1,2-diacyl-sn-glycero-3-phosphate + ADP + H(+). The enzyme catalyses 1,2-di-(9Z-octadecenoyl)-sn-glycerol + ATP = 1,2-di-(9Z-octadecenoyl)-sn-glycero-3-phosphate + ADP + H(+). It catalyses the reaction 1-octadecanoyl-2-(9Z,12Z)-octadecadienoyl-sn-glycerol + ATP = 1-octadecanoyl-2-(9Z,12Z-octadecadienoyl)-sn-glycero-3-phosphate + ADP + H(+). It carries out the reaction 1-octadecanoyl-2-(5Z,8Z,11Z,14Z-eicosatetraenoyl)-sn-glycerol + ATP = 1-octadecanoyl-2-(5Z,8Z,11Z,14Z-eicosatetraenoyl)-sn-glycero-3-phosphate + ADP + H(+). It participates in lipid metabolism; glycerolipid metabolism. Its activity is regulated as follows. Activated by phosphatidylserine. Diacylglycerol kinase that converts diacylglycerol/DAG into phosphatidic acid/phosphatidate/PA and regulates the respective levels of these two bioactive lipids. Thereby, acts as a central switch between the signaling pathways activated by these second messengers with different cellular targets and opposite effects in numerous biological processes. Has probably no preference for any of the diacylglycerols in terms of the acyl chain composition, especially for the acyl chain at the sn-2 position. By controlling the diacylglycerol/DAG-mediated activation of RASGRP3, negatively regulates the Rap1 signaling pathway. May play a role in presynaptic diacylglycerol/DAG signaling and control neurotransmitter release during metabotropic glutamate receptor-dependent long-term depression. In terms of biological role, has a decreased affinity for ATP and a reduced diacylglycerol kinase activity. Has no preference for any of the diacylglycerols in terms of the acyl chain composition. Its function is as follows. Has no diacylglycerol kinase activity. This is Diacylglycerol kinase iota from Rattus norvegicus (Rat).